The chain runs to 30 residues: Trypsin inhibitor 3 (30 aa).

3 disulfides stabilise this stretch: Cys4–Cys21, Cys11–Cys23, and Cys17–Cys29.

The protein belongs to the protease inhibitor I7 (squash-type serine protease inhibitor) family.

The protein localises to the secreted. Inhibits lysyl endopeptidase and trypsin. The chain is Trypsin inhibitor 3 from Cucumis melo var. conomon (Oriental pickling melon).